Reading from the N-terminus, the 256-residue chain is Thiazole synthase (256 aa).

Lys-95 functions as the Schiff-base intermediate with DXP in the catalytic mechanism. 1-deoxy-D-xylulose 5-phosphate-binding positions include Gly-156, 182–183 (AG), and 204–205 (NT).

The protein belongs to the ThiG family. In terms of assembly, homotetramer. Forms heterodimers with either ThiH or ThiS.

The protein localises to the cytoplasm. The enzyme catalyses [ThiS sulfur-carrier protein]-C-terminal-Gly-aminoethanethioate + 2-iminoacetate + 1-deoxy-D-xylulose 5-phosphate = [ThiS sulfur-carrier protein]-C-terminal Gly-Gly + 2-[(2R,5Z)-2-carboxy-4-methylthiazol-5(2H)-ylidene]ethyl phosphate + 2 H2O + H(+). It functions in the pathway cofactor biosynthesis; thiamine diphosphate biosynthesis. Catalyzes the rearrangement of 1-deoxy-D-xylulose 5-phosphate (DXP) to produce the thiazole phosphate moiety of thiamine. Sulfur is provided by the thiocarboxylate moiety of the carrier protein ThiS. In vitro, sulfur can be provided by H(2)S. In Salmonella enteritidis PT4 (strain P125109), this protein is Thiazole synthase.